A 450-amino-acid polypeptide reads, in one-letter code: Plasminogen-binding protein PgbA (450 aa).

3 stretches are compositionally biased toward basic and acidic residues: residues 262–273 (EIKQEAIKEPKK), 284–310 (LEEK…DERK), and 317–362 (KAME…REIN). Residues 262-450 (EIKQEAIKEP…RRKALEMNKK (189 aa)) form a disordered region. A compositionally biased stretch (polar residues) spans 363–386 (QESANEPSSENNATLKDTENTSVL). Positions 389 to 450 (SAAKKEAPKP…RRKALEMNKK (62 aa)) are enriched in basic and acidic residues.

The protein localises to the cell surface. Its function is as follows. Binds plasminogen, specifically, and in a concentration and lysine-dependent manner. Plasminogen is the precursor of plasmin, a serine protease that cleaves fibrin, fibronectin, laminin and vitronectin. Acquisition of plasminogen/plasmin could enable H.pylori to degrade host components. The chain is Plasminogen-binding protein PgbA (pgbA) from Helicobacter pylori (strain J99 / ATCC 700824) (Campylobacter pylori J99).